The primary structure comprises 219 residues: Transmembrane protein 17B (219 aa).

Residue Asn26 is glycosylated (N-linked (GlcNAc...) asparagine). The next 4 helical transmembrane spans lie at 51–71, 84–104, 116–136, and 147–167; these read MMLY…IITM, ILLT…LYIG, LAGF…FLLT, and LAVH…SFLV. Residues Asn195 and Asn203 are each glycosylated (N-linked (GlcNAc...) asparagine).

The protein belongs to the TMEM17 family. In terms of assembly, part of the tectonic-like complex (also named B9 complex).

It localises to the cell projection. The protein resides in the cilium membrane. Transmembrane component of the tectonic-like complex, a complex localized at the transition zone of primary cilia and acting as a barrier that prevents diffusion of transmembrane proteins between the cilia and plasma membranes. Required for ciliogenesis and sonic hedgehog/SHH signaling. This chain is Transmembrane protein 17B (Tmem17-b), found in Xenopus tropicalis (Western clawed frog).